The sequence spans 529 residues: Mitochondrial inner membrane magnesium transporter MIT1 (529 aa).

Coiled-coil stretches lie at residues 336-388 and 416-450; these read KIQL…LKNE and LLET…LNLD. The chain crosses the membrane as a helical span at residues 456–476; sequence FILLNAKISFSTLFCSICAVI. Residues 477-492 lie on the Mitochondrial intermembrane side of the membrane; the sequence is TSLFGMNLKNFIEHND. The helical transmembrane segment at 493 to 513 threads the bilayer; the sequence is YAFFIVSIFITSWSIVGIYFT. At 514–529 the chain is on the mitochondrial matrix side; sequence KNINTLLRFFDKYNVK.

Belongs to the CorA metal ion transporter (MIT) (TC 1.A.35) family.

The protein localises to the mitochondrion inner membrane. Mitochondrial inner membrane magnesium transporter required for mitochondrial magnesium homeostasis. Involved in the development of the sporozoite in the mosquito vector midgut. The polypeptide is Mitochondrial inner membrane magnesium transporter MIT1 (Plasmodium falciparum (isolate 3D7)).